Reading from the N-terminus, the 75-residue chain is Large ribosomal subunit protein bL31 (75 aa).

This sequence belongs to the bacterial ribosomal protein bL31 family. Type A subfamily. In terms of assembly, part of the 50S ribosomal subunit.

Binds the 23S rRNA. The chain is Large ribosomal subunit protein bL31 from Chlorobium luteolum (strain DSM 273 / BCRC 81028 / 2530) (Pelodictyon luteolum).